A 709-amino-acid chain; its full sequence is Elongation factor G (709 aa).

The 286-residue stretch at 10–295 (NQVRNIGIMA…AVVDYLPSPE (286 aa)) folds into the tr-type G domain. GTP is bound by residues 19–26 (AHIDAGKT), 91–95 (DTPGH), and 145–148 (NKMD).

The protein belongs to the TRAFAC class translation factor GTPase superfamily. Classic translation factor GTPase family. EF-G/EF-2 subfamily.

The protein resides in the cytoplasm. Its function is as follows. Catalyzes the GTP-dependent ribosomal translocation step during translation elongation. During this step, the ribosome changes from the pre-translocational (PRE) to the post-translocational (POST) state as the newly formed A-site-bound peptidyl-tRNA and P-site-bound deacylated tRNA move to the P and E sites, respectively. Catalyzes the coordinated movement of the two tRNA molecules, the mRNA and conformational changes in the ribosome. This Bifidobacterium animalis subsp. lactis (strain AD011) protein is Elongation factor G.